An 892-amino-acid polypeptide reads, in one-letter code: Alanine--tRNA ligase (892 aa).

Residues His574, His578, Cys676, and His680 each contribute to the Zn(2+) site.

The protein belongs to the class-II aminoacyl-tRNA synthetase family. The cofactor is Zn(2+).

It is found in the cytoplasm. It carries out the reaction tRNA(Ala) + L-alanine + ATP = L-alanyl-tRNA(Ala) + AMP + diphosphate. Catalyzes the attachment of alanine to tRNA(Ala) in a two-step reaction: alanine is first activated by ATP to form Ala-AMP and then transferred to the acceptor end of tRNA(Ala). Also edits incorrectly charged Ser-tRNA(Ala) and Gly-tRNA(Ala) via its editing domain. This Prochlorococcus marinus (strain MIT 9303) protein is Alanine--tRNA ligase.